We begin with the raw amino-acid sequence, 470 residues long: Histone deacetylase HOS1 (470 aa).

The interval 47 to 392 (LTFPYARKDD…YTYLTWCVTK (346 aa)) is histone deacetylase. Ser-110 carries the phosphoserine modification. His-211 is a catalytic residue.

Belongs to the histone deacetylase family. HD type 1 subfamily.

It is found in the nucleus. It catalyses the reaction N(6)-acetyl-L-lysyl-[histone] + H2O = L-lysyl-[histone] + acetate. Functionally, responsible for the deacetylation of lysine residues on the N-terminal part of the core histones (H2A, H2B, H3 and H4). Histone deacetylation plays an important role in transcriptional regulation, cell cycle progression and developmental events. Histone deacetylases act via the formation of large multiprotein complexes. This chain is Histone deacetylase HOS1 (HOS1), found in Saccharomyces cerevisiae (strain ATCC 204508 / S288c) (Baker's yeast).